Consider the following 94-residue polypeptide: MLVFSKFLTRTEPFMIHLFILAMFVMIYKFFPGGFENNFSVANPDKKASWIDCIYFGVTTHSTVGFGDILPKTTGAKLCTIAHIVTVFFIVLTL.

The helical transmembrane segment at 14-34 (FMIHLFILAMFVMIYKFFPGG) threads the bilayer. An N-linked (GlcNAc...) asparagine; by host glycan is attached at asparagine 38. Residues 74-94 (TGAKLCTIAHIVTVFFIVLTL) traverse the membrane as a helical segment.

Belongs to the two pore domain potassium channel (TC 1.A.1.12) family.

The protein localises to the membrane. In terms of biological role, potassium-selective channel essential in the virus replication cycle. May be involved in preventing multiple infections (Potential). In Paramecium bursaria Chlorella virus 1 (PBCV-1), this protein is Potassium channel protein kcv (A250R).